Here is a 34-residue protein sequence, read N- to C-terminus: Chlorotoxin-like peptide AaCtx (34 aa).

Disulfide bonds link Cys2–Cys19, Cys5–Cys27, Cys16–Cys32, and Cys20–Cys34.

It belongs to the short scorpion toxin superfamily. Chloride channel inhibitor family. As to expression, expressed by the venom gland.

It localises to the secreted. Functionally, toxin with unknown function in healthy organisms. On glioma cells, interacts with chloride channels (probably ClC-3/CLCN3) and MMP2 at the surface of glioma cells. This complex is then internalized via caveolae, thus inhibiting the chloride channels necessary for cell shrinkage and tumor propagation. Inhibits migration and invasion of U87 glioma cells expressing CLCN3/ClC-3 voltage-gated chloride channels. The chain is Chlorotoxin-like peptide AaCtx from Androctonus australis (Sahara scorpion).